Reading from the N-terminus, the 955-residue chain is Mediator of RNA polymerase II transcription subunit 16 (955 aa).

It belongs to the Mediator complex subunit 16 family. As to quaternary structure, component of the Mediator complex.

Its subcellular location is the nucleus. Functionally, component of the Mediator complex, a coactivator involved in the regulated transcription of nearly all RNA polymerase II-dependent genes. Mediator functions as a bridge to convey information from gene-specific regulatory proteins to the basal RNA polymerase II transcription machinery. Mediator is recruited to promoters by direct interactions with regulatory proteins and serves as a scaffold for the assembly of a functional preinitiation complex with RNA polymerase II and the general transcription factors. The sequence is that of Mediator of RNA polymerase II transcription subunit 16 (sin4) from Neosartorya fischeri (strain ATCC 1020 / DSM 3700 / CBS 544.65 / FGSC A1164 / JCM 1740 / NRRL 181 / WB 181) (Aspergillus fischerianus).